A 261-amino-acid chain; its full sequence is WW domain-binding protein 2 (261 aa).

Residues 1-84 (MALNKNHSEG…YLMKDCEIKQ (84 aa)) form the GRAM domain. Phosphotyrosine; by YES and SRC is present on Tyr-192. The PPxY motif 1 signature appears at 196–200 (PPPPY). The segment covering 196–209 (PPPPYPGPMEPPVS) has biased composition (pro residues). Positions 196 to 261 (PPPPYPGPME…YYPPEDKKTQ (66 aa)) are disordered. Residues 218–230 (AAEAKAAEAAASA) show a composition bias toward low complexity. Tyr-231 is subject to Phosphotyrosine; by YES and SRC. The span at 245 to 254 (SQPPPPPYYP) shows a compositional bias: pro residues. A PPxY motif 2 motif is present at residues 248–252 (PPPPY).

As to quaternary structure, binds to the WW domain of YAP1, WWP1 and WWP2. Interacts with NEDD4. Interacts with ESR1 and UBE3A. In terms of processing, phosphorylated in repsonse to EGF as well as estrogen and progesterone hormones. Tyr-192 and Tyr-231 are phosphorylated by YES and SRC inducing nuclear translocation. In terms of tissue distribution, ubiquitous.

It localises to the cytoplasm. The protein resides in the nucleus. Functionally, acts as a transcriptional coactivator of estrogen and progesterone receptors (ESR1 and PGR) upon hormone activation. In presence of estrogen, binds to ESR1-responsive promoters. Synergizes with YAP1 to enhance PGR activity. Modulates expression of post-synaptic scaffolding proteins via regulation of ESR1, ESR2 and PGR. This Homo sapiens (Human) protein is WW domain-binding protein 2.